The primary structure comprises 287 residues: tRNA pseudouridine synthase B (287 aa).

Residue D37 is the Nucleophile of the active site.

The protein belongs to the pseudouridine synthase TruB family. Type 1 subfamily.

The catalysed reaction is uridine(55) in tRNA = pseudouridine(55) in tRNA. Its function is as follows. Responsible for synthesis of pseudouridine from uracil-55 in the psi GC loop of transfer RNAs. The protein is tRNA pseudouridine synthase B of Caldicellulosiruptor saccharolyticus (strain ATCC 43494 / DSM 8903 / Tp8T 6331).